Here is a 390-residue protein sequence, read N- to C-terminus: Probable L-tyrosine/L-aspartate decarboxylase (390 aa).

N6-(pyridoxal phosphate)lysine is present on lysine 239.

Belongs to the group II decarboxylase family. MfnA subfamily. The cofactor is pyridoxal 5'-phosphate.

The enzyme catalyses L-tyrosine + H(+) = tyramine + CO2. It carries out the reaction L-aspartate + H(+) = beta-alanine + CO2. Its pathway is cofactor biosynthesis; methanofuran biosynthesis. The protein operates within cofactor biosynthesis; coenzyme A biosynthesis. Functionally, catalyzes the decarboxylation of L-tyrosine to produce tyramine for methanofuran biosynthesis. Can also catalyze the decarboxylation of L-aspartate to produce beta-alanine for coenzyme A (CoA) biosynthesis. The chain is Probable L-tyrosine/L-aspartate decarboxylase from Methanococcus aeolicus (strain ATCC BAA-1280 / DSM 17508 / OCM 812 / Nankai-3).